The chain runs to 99 residues: Aspartyl/glutamyl-tRNA(Asn/Gln) amidotransferase subunit C (99 aa).

This sequence belongs to the GatC family. As to quaternary structure, heterotrimer of A, B and C subunits.

The enzyme catalyses L-glutamyl-tRNA(Gln) + L-glutamine + ATP + H2O = L-glutaminyl-tRNA(Gln) + L-glutamate + ADP + phosphate + H(+). The catalysed reaction is L-aspartyl-tRNA(Asn) + L-glutamine + ATP + H2O = L-asparaginyl-tRNA(Asn) + L-glutamate + ADP + phosphate + 2 H(+). In terms of biological role, allows the formation of correctly charged Asn-tRNA(Asn) or Gln-tRNA(Gln) through the transamidation of misacylated Asp-tRNA(Asn) or Glu-tRNA(Gln) in organisms which lack either or both of asparaginyl-tRNA or glutaminyl-tRNA synthetases. The reaction takes place in the presence of glutamine and ATP through an activated phospho-Asp-tRNA(Asn) or phospho-Glu-tRNA(Gln). The polypeptide is Aspartyl/glutamyl-tRNA(Asn/Gln) amidotransferase subunit C (Cupriavidus taiwanensis (strain DSM 17343 / BCRC 17206 / CCUG 44338 / CIP 107171 / LMG 19424 / R1) (Ralstonia taiwanensis (strain LMG 19424))).